Consider the following 217-residue polypeptide: tRNA (guanine-N(7)-)-methyltransferase (217 aa).

4 residues coordinate S-adenosyl-L-methionine: Glu-44, Glu-69, Asp-96, and Asp-118. Residue Asp-118 is part of the active site. Substrate-binding positions include Lys-122, Asp-154, and 191 to 194 (TEYE).

The protein belongs to the class I-like SAM-binding methyltransferase superfamily. TrmB family.

The enzyme catalyses guanosine(46) in tRNA + S-adenosyl-L-methionine = N(7)-methylguanosine(46) in tRNA + S-adenosyl-L-homocysteine. Its pathway is tRNA modification; N(7)-methylguanine-tRNA biosynthesis. In terms of biological role, catalyzes the formation of N(7)-methylguanine at position 46 (m7G46) in tRNA. The chain is tRNA (guanine-N(7)-)-methyltransferase from Bacillus anthracis (strain CDC 684 / NRRL 3495).